The primary structure comprises 310 residues: E3 ubiquitin-protein ligase CSU1 (310 aa).

Residues Cys-43–Ile-67 form an RING-type 1; degenerate zinc finger. Residues Lys-75–Glu-95 are a coiled coil. The tract at residues Glu-110–Asn-138 is disordered. Over residues Asn-122–Gly-133 the composition is skewed to basic and acidic residues. The RING-type 2 zinc-finger motif lies at Cys-221–Asp-263.

The protein belongs to the NOSIP family.

It localises to the nucleus. It is found in the nucleus speckle. The enzyme catalyses S-ubiquitinyl-[E2 ubiquitin-conjugating enzyme]-L-cysteine + [acceptor protein]-L-lysine = [E2 ubiquitin-conjugating enzyme]-L-cysteine + N(6)-ubiquitinyl-[acceptor protein]-L-lysine.. The protein operates within protein modification; protein ubiquitination. RING-finger E3 ubiquitin-protein ligase that plays an major role in maintaining COP1 homeostasis in darkness. Negatively regulates COP1 protein accumulation by targeting COP1 for ubiquitination and subsequent proteasomal degradation in dark-grown seedlings. Negatively regulates the accumulation of SPA1 protein in the dark. This Arabidopsis thaliana (Mouse-ear cress) protein is E3 ubiquitin-protein ligase CSU1.